The sequence spans 428 residues: UDP-N-acetylglucosamine 1-carboxyvinyltransferase 2 (428 aa).

22-23 is a phosphoenolpyruvate binding site; sequence KN. UDP-N-acetyl-alpha-D-glucosamine is bound at residue Arg-92. The active-site Proton donor is Cys-116. At Cys-116 the chain carries 2-(S-cysteinyl)pyruvic acid O-phosphothioketal. Residues 121 to 125, Asp-304, and Ile-326 contribute to the UDP-N-acetyl-alpha-D-glucosamine site; that span reads RPIDQ.

This sequence belongs to the EPSP synthase family. MurA subfamily.

Its subcellular location is the cytoplasm. It catalyses the reaction phosphoenolpyruvate + UDP-N-acetyl-alpha-D-glucosamine = UDP-N-acetyl-3-O-(1-carboxyvinyl)-alpha-D-glucosamine + phosphate. The protein operates within cell wall biogenesis; peptidoglycan biosynthesis. Functionally, cell wall formation. Adds enolpyruvyl to UDP-N-acetylglucosamine. The protein is UDP-N-acetylglucosamine 1-carboxyvinyltransferase 2 of Oceanobacillus iheyensis (strain DSM 14371 / CIP 107618 / JCM 11309 / KCTC 3954 / HTE831).